Reading from the N-terminus, the 451-residue chain is MKWLKKQAELYPQKQFLNDSTFAQINQEVNKMAEHLAPLIDNQSRVALLSENSVEMAVVLFALLGLSKEVLLLNRHLTEYELADQIKELKIDKVFTSDLLTEKVTDSISFSEIWTSNPCPVSLSADFPDEKIAVIMNTSATTGKFKSVPITWGMISNHVKASKETLGAYDNDNWLVILPMFHVSGLSIIMRTLYNATSATVVDKFDENQLLEMINSGKINMVSLVPTLLTRIADKLHSNNLRLILLGGEFIPQPLIKKCQELGLPIYKTYGMTESFSQSVTFNILDFPDKTSSVGRPLPGVEIEIRQADLAGVGEIWLKSPMLMKAYLGQKPYGTAFETGDIGYLDTDGFLYLLNRRKDIIISGGENIYPKEIEDLVYSLPEIKECALVAKPDAKWGQVPILFVSGNISQEKLENFLTEKLAKYKRPQSITFMDELPKNASGKILRKELKG.

Belongs to the ATP-dependent AMP-binding enzyme family. MenE subfamily.

The enzyme catalyses 2-succinylbenzoate + ATP + CoA = 2-succinylbenzoyl-CoA + AMP + diphosphate. The protein operates within quinol/quinone metabolism; 1,4-dihydroxy-2-naphthoate biosynthesis; 1,4-dihydroxy-2-naphthoate from chorismate: step 5/7. It participates in quinol/quinone metabolism; menaquinone biosynthesis. In terms of biological role, converts 2-succinylbenzoate (OSB) to 2-succinylbenzoyl-CoA (OSB-CoA). The chain is 2-succinylbenzoate--CoA ligase from Lactococcus lactis subsp. lactis (strain IL1403) (Streptococcus lactis).